The chain runs to 371 residues: Jasmonate-induced oxygenase 2 (371 aa).

The Fe2OG dioxygenase domain maps to 219–320 (NIGACLRVNY…RVSLAFFYNP (102 aa)). A jasmonate-binding site is contributed by Arg-225. Residues Asn-227 and Tyr-229 each coordinate 2-oxoglutarate. The Fe cation site is built by His-244, Asp-246, and His-301. Arg-311 and Ser-313 together coordinate 2-oxoglutarate. Residues Arg-350 and Arg-354 each coordinate jasmonate.

The protein belongs to the iron/ascorbate-dependent oxidoreductase family. L-ascorbate serves as cofactor. Fe(2+) is required as a cofactor.

It carries out the reaction jasmonate + 2-oxoglutarate + O2 = (1R,2R)-12-hydroxyjasmonate + succinate + CO2. Functionally, 2-oxoglutarate-dependent dioxygenase involved in the oxidation of jasmonate (JA), a stress-induced phytohormone synthesized in response to attack by pathogens and herbivores, which triggers the activation of defense responses via the JA-mediated signaling pathway. Converts JA to 12-hydroxyjasmonate (12OH-JA), an inactive form of JA. Is specific to free JA, and cannot oxidize the bioactive form jasmonoyl-L-isoleucine (JA-Ile) or other JA-amino acid conjugates. Prevents over-accumulation of JA and indirectly its bioactive form JA-Ile under stress response. Acts as a negative regulator of JA-mediated defense signaling, by contributing to 12OH-JA accumulation, which represses JA defense responses upon infection by the fungal pathogen Botrytis cinerea. Acts as a negative regulator of JA-mediated defense responses upon infestation by the herbivorous caterpillar Mamestra brassicae. May be involved in the catabolism of cytotoxic polycyclic aromatic hydrocarbons (PAHs). This is Jasmonate-induced oxygenase 2 from Arabidopsis thaliana (Mouse-ear cress).